A 773-amino-acid chain; its full sequence is Carnitine O-palmitoyltransferase 1, liver isoform (773 aa).

Ala-2 carries the post-translational modification N-acetylalanine. Residues 2–47 (AEAHQAVAFQFTVTPDGIDLRLSHEALKQICLSGLHSWKKKFIRFK) lie on the Cytoplasmic side of the membrane. Residues 48 to 73 (NGIITGVFPANPSSWLIVVVGVISSM) traverse the membrane as a helical segment. Over 74–102 (HAKVDPSLGMIAKISRTLDTTGRMSSQTK) the chain is Mitochondrial intermembrane. The helical transmembrane segment at 103–122 (NIVSGVLFGTGLWVAVIMTM) threads the bilayer. The Cytoplasmic segment spans residues 123–773 (RYSLKVLLSY…LFGLTINSKK (651 aa)). Tyr-282 bears the 3'-nitrotyrosine mark. The active-site Proton acceptor is the His-473. CoA is bound at residue 555 to 567 (GKGLIKKCRTSPD). Position 588 is a phosphothreonine (Thr-588). The residue at position 589 (Tyr-589) is a 3'-nitrotyrosine. 2 residues coordinate (R)-carnitine: Tyr-589 and Thr-602. Thr-604 bears the Phosphothreonine mark. 2 positions are modified to phosphoserine: Ser-741 and Ser-747.

This sequence belongs to the carnitine/choline acetyltransferase family. In terms of assembly, homohexamer and homotrimer. Identified in a complex that contains at least CPT1A, ACSL1 and VDAC1. Also identified in complexes with ACSL1 and VDAC2 and VDAC3. Interacts with ZDHHC4. In terms of tissue distribution, liver and kidney.

Its subcellular location is the mitochondrion outer membrane. It carries out the reaction (R)-carnitine + hexadecanoyl-CoA = O-hexadecanoyl-(R)-carnitine + CoA. It catalyses the reaction succinyl-CoA + L-lysyl-[protein] = N(6)-succinyl-L-lysyl-[protein] + CoA + H(+). Its pathway is lipid metabolism; fatty acid beta-oxidation. Its activity is regulated as follows. Inhibited by malonyl-CoA. Functionally, catalyzes the transfer of the acyl group of long-chain fatty acid-CoA conjugates onto carnitine, an essential step for the mitochondrial uptake of long-chain fatty acids and their subsequent beta-oxidation in the mitochondrion. Also possesses a lysine succinyltransferase activity that can regulate enzymatic activity of substrate proteins such as ENO1 and metabolism independent of its classical carnitine O-palmitoyltransferase activity. Plays an important role in hepatic triglyceride metabolism. Also plays a role in inducible regulatory T-cell (iTreg) differentiation once activated by butyryl-CoA that antagonizes malonyl-CoA-mediated CPT1A repression. Sustains the IFN-I response by recruiting ZDHCC4 to palmitoylate MAVS at the mitochondria leading to MAVS stabilization and activation. The chain is Carnitine O-palmitoyltransferase 1, liver isoform (Cpt1a) from Rattus norvegicus (Rat).